A 279-amino-acid polypeptide reads, in one-letter code: Putative cysteine-rich repeat secretory protein 22 (279 aa).

An N-terminal signal peptide occupies residues 1–31 (MSSSSASKLLGSVLVFAMISVQIVFIHCVMS). 2 consecutive Gnk2-homologous domains span residues 44 to 146 (YLHH…PINS) and 152 to 276 (YEYN…LYRF).

This sequence belongs to the cysteine-rich repeat secretory protein family.

The protein localises to the secreted. The protein is Putative cysteine-rich repeat secretory protein 22 (CRRSP22) of Arabidopsis thaliana (Mouse-ear cress).